We begin with the raw amino-acid sequence, 483 residues long: MHQLTLAEIARGLADKKFSSEELTKVLLARITQLDPQLNSFISLTEELALEQAKAADVRRANGESGALLGAPIAHKDLFCTQGIRTSCGSKMLDNFKAPYDATVVSKLAAAGTVTLGKTNMDEFAMGSANESSWYGAVKNPWNLEHVPGGSSGGSAAAVAARLLPAATATDTGGSIRQPAAFTNLTGLKPTYGRVSRWGMIAYASSLDQGGPLARTAEDCAILLQGMAGFDPNDSTSIDEPVPDYAAGLNGSLQGLRIGVPKEYFGAGLDPRIADLIQNSIKELQKLGAVIKEISLPNMQHAIPAYYVIAPAEASSNLSRFDGVRFGHRCADPKNLEDLYKRSRGEGFGPEVQRRIMVGAYALSAGYYDAYYLKAQKIRRLVKNDFMAAFNEVDIILGPTTPNPAWKLGAKNSDPVAAYLEDVYTITANLAGLPGLSMPAGFVDGLPVGVQLLAPYFQEGRLLNVAHQYQLNTDWHTRTPTGF.

Residues Lys76 and Ser151 each act as charge relay system in the active site. Ser175 acts as the Acyl-ester intermediate in catalysis.

The protein belongs to the amidase family. GatA subfamily. In terms of assembly, heterotrimer of A, B and C subunits.

It catalyses the reaction L-glutamyl-tRNA(Gln) + L-glutamine + ATP + H2O = L-glutaminyl-tRNA(Gln) + L-glutamate + ADP + phosphate + H(+). Functionally, allows the formation of correctly charged Gln-tRNA(Gln) through the transamidation of misacylated Glu-tRNA(Gln) in organisms which lack glutaminyl-tRNA synthetase. The reaction takes place in the presence of glutamine and ATP through an activated gamma-phospho-Glu-tRNA(Gln). This chain is Glutamyl-tRNA(Gln) amidotransferase subunit A, found in Pseudomonas fluorescens (strain Pf0-1).